Consider the following 1183-residue polypeptide: ATP-dependent helicase/nuclease subunit A (1183 aa).

Positions 3–461 (VQWTDEQQRA…IDLTKNFRSR (459 aa)) constitute a UvrD-like helicase ATP-binding domain. Residue 24-31 (AAAGSGKT) participates in ATP binding. The 297-residue stretch at 473 to 769 (RQVMDEAVGE…RIMTIHQSKG (297 aa)) folds into the UvrD-like helicase C-terminal domain.

It belongs to the helicase family. AddA subfamily. In terms of assembly, heterodimer of AddA and AddB/RexB. Mg(2+) is required as a cofactor.

The catalysed reaction is Couples ATP hydrolysis with the unwinding of duplex DNA by translocating in the 3'-5' direction.. The enzyme catalyses ATP + H2O = ADP + phosphate + H(+). Functionally, the heterodimer acts as both an ATP-dependent DNA helicase and an ATP-dependent, dual-direction single-stranded exonuclease. Recognizes the chi site generating a DNA molecule suitable for the initiation of homologous recombination. The AddA nuclease domain is required for chi fragment generation; this subunit has the helicase and 3' -&gt; 5' nuclease activities. The chain is ATP-dependent helicase/nuclease subunit A from Exiguobacterium sibiricum (strain DSM 17290 / CCUG 55495 / CIP 109462 / JCM 13490 / 255-15).